The sequence spans 80 residues: Defensin-like protein 13 (80 aa).

An N-terminal signal peptide occupies residues M1 to A29. Q30 is subject to Pyrrolidone carboxylic acid. 4 disulfide bridges follow: C33-C80, C44-C65, C50-C74, and C54-C76.

The protein belongs to the DEFL family. As to quaternary structure, forms oligomers in its native state. As to expression, expressed predominantly in siliques and dry seeds.

The protein resides in the secreted. In terms of biological role, confers broad-spectrum resistance to pathogens. Possesses antifungal activity sensitive to inorganic cations in vitro. The chain is Defensin-like protein 13 (PDF1.1) from Arabidopsis thaliana (Mouse-ear cress).